A 458-amino-acid polypeptide reads, in one-letter code: uncharacterized protein (458 aa).

One can recognise a TRAM domain in the interval 5–65; the sequence is QAPVNKNDVV…KGYGFGRVLN (61 aa). Positions 78, 84, 87, and 165 each coordinate [4Fe-4S] cluster. Gln289, Tyr318, Glu339, and Asp387 together coordinate S-adenosyl-L-methionine. The Nucleophile role is filled by Cys414.

It belongs to the class I-like SAM-binding methyltransferase superfamily. RNA M5U methyltransferase family.

This is an uncharacterized protein from Halalkalibacterium halodurans (strain ATCC BAA-125 / DSM 18197 / FERM 7344 / JCM 9153 / C-125) (Bacillus halodurans).